The primary structure comprises 1226 residues: Phosphatidylinositol 3,4,5-trisphosphate 5-phosphatase 2B (1226 aa).

Residues 6 to 102 enclose the SH2 domain; it reads WYHRDISRVR…GLVAPLLYPV (97 aa). The disordered stretch occupies residues 106–144; that stretch reads SEANDESSDGDDEKPGSTFANSPPRAISPTATSPPSSSA. Acidic residues predominate over residues 108–117; that stretch reads ANDESSDGDD. Positions 127–144 are enriched in low complexity; that stretch reads SPPRAISPTATSPPSSSA. The NPXY motif signature appears at 906–909; it reads NPAY. Phosphotyrosine is present on Tyr909. 2 disordered regions span residues 945–964 and 985–1035; these read RVTG…DFTE and SSAA…LSGK. The segment covering 1011-1025 has biased composition (low complexity); the sequence is HSSNSSLQLQSHKNN. An SAM domain is found at 1163–1226; it reads GAPETVRELL…ILENLPKIWD (64 aa).

The protein belongs to the inositol 1,4,5-trisphosphate 5-phosphatase family. In terms of processing, tyrosine phosphorylated by the members of the SRC family after exposure to a diverse array of extracellular stimuli.

It localises to the cytoplasm. Its subcellular location is the cytosol. The protein localises to the cytoskeleton. The protein resides in the membrane. It is found in the cell projection. It localises to the filopodium. Its subcellular location is the lamellipodium. The protein localises to the nucleus. The protein resides in the nucleus speckle. The enzyme catalyses a 1,2-diacyl-sn-glycero-3-phospho-(1D-myo-inositol-3,4,5-trisphosphate) + H2O = a 1,2-diacyl-sn-glycero-3-phospho-(1D-myo-inositol-3,4-bisphosphate) + phosphate. In terms of biological role, phosphatidylinositol (PtdIns) phosphatase that specifically hydrolyzes the 5-phosphate of phosphatidylinositol-3,4,5-trisphosphate (PtdIns(3,4,5)P3) to produce PtdIns(3,4)P2, thereby negatively regulating the PI3K (phosphoinositide 3-kinase) pathways. Plays a central role in regulation of PI3K-dependent insulin signaling, although the precise molecular mechanisms and signaling pathways remain unclear. Part of a signaling pathway that regulates actin cytoskeleton remodeling. Required for the maintenance and dynamic remodeling of actin structures as well as in endocytosis, having a major impact on ligand-induced EGFR internalization and degradation. Participates in regulation of cortical and submembraneous actin. Regulates cell adhesion and cell spreading. Acts as a negative regulator of the FC-gamma-RIIA receptor (FCGR2A). Mediates signaling from the FC-gamma-RIIB receptor (FCGR2B), playing a central role in terminating signal transduction from activating immune/hematopoietic cell receptor systems. May also hydrolyze PtdIns(1,3,4,5)P4, and could thus affect the levels of the higher inositol polyphosphates like InsP6. This is Phosphatidylinositol 3,4,5-trisphosphate 5-phosphatase 2B (inppl1b) from Danio rerio (Zebrafish).